The following is a 120-amino-acid chain: FK506-binding protein 1A (120 aa).

The PPIase FKBP-type domain occupies 26 to 114; it reads GDNVDVHYKG…IFETELVGIK (89 aa).

The protein belongs to the FKBP-type PPIase family. FKBP1 subfamily.

It is found in the cytoplasm. The enzyme catalyses [protein]-peptidylproline (omega=180) = [protein]-peptidylproline (omega=0). PPIases accelerate the folding of proteins. It catalyzes the cis-trans isomerization of proline imidic peptide bonds in oligopeptides. This Neurospora crassa (strain ATCC 24698 / 74-OR23-1A / CBS 708.71 / DSM 1257 / FGSC 987) protein is FK506-binding protein 1A (fkr-2).